Reading from the N-terminus, the 253-residue chain is DNA repair protein RecO (253 aa).

Belongs to the RecO family.

Functionally, involved in DNA repair and RecF pathway recombination. The chain is DNA repair protein RecO from Dehalococcoides mccartyi (strain ATCC BAA-2100 / JCM 16839 / KCTC 5957 / BAV1).